Consider the following 451-residue polypeptide: Tubulin alpha chain (451 aa).

Residue Q11 coordinates GTP. K40 is subject to N6-acetyllysine. E71, S140, G144, T145, T179, N206, and N228 together coordinate GTP. E71 contacts Mg(2+). E254 is an active-site residue.

It belongs to the tubulin family. As to quaternary structure, dimer of alpha and beta chains. A typical microtubule is a hollow water-filled tube with an outer diameter of 25 nm and an inner diameter of 15 nM. Alpha-beta heterodimers associate head-to-tail to form protofilaments running lengthwise along the microtubule wall with the beta-tubulin subunit facing the microtubule plus end conferring a structural polarity. Microtubules usually have 13 protofilaments but different protofilament numbers can be found in some organisms and specialized cells. Mg(2+) is required as a cofactor. Post-translationally, undergoes a tyrosination/detyrosination cycle, the cyclic removal and re-addition of a C-terminal tyrosine residue by the enzymes tubulin tyrosine carboxypeptidase (TTCP) and tubulin tyrosine ligase (TTL), respectively. Acetylation of alpha chains at Lys-40 stabilizes microtubules and affects affinity and processivity of microtubule motors. This modification has a role in multiple cellular functions, ranging from cell motility, cell cycle progression or cell differentiation to intracellular trafficking and signaling. In terms of tissue distribution, actively expressed in the lens but does not seem to be lens-specific.

The protein resides in the cytoplasm. It localises to the cytoskeleton. The enzyme catalyses GTP + H2O = GDP + phosphate + H(+). Tubulin is the major constituent of microtubules, a cylinder consisting of laterally associated linear protofilaments composed of alpha- and beta-tubulin heterodimers. Microtubules grow by the addition of GTP-tubulin dimers to the microtubule end, where a stabilizing cap forms. Below the cap, tubulin dimers are in GDP-bound state, owing to GTPase activity of alpha-tubulin. The chain is Tubulin alpha chain from Enteroctopus dofleini (North Pacific giant octopus).